The following is a 99-amino-acid chain: Aspartyl/glutamyl-tRNA(Asn/Gln) amidotransferase subunit C (99 aa).

It belongs to the GatC family. As to quaternary structure, heterotrimer of A, B and C subunits.

It catalyses the reaction L-glutamyl-tRNA(Gln) + L-glutamine + ATP + H2O = L-glutaminyl-tRNA(Gln) + L-glutamate + ADP + phosphate + H(+). It carries out the reaction L-aspartyl-tRNA(Asn) + L-glutamine + ATP + H2O = L-asparaginyl-tRNA(Asn) + L-glutamate + ADP + phosphate + 2 H(+). Allows the formation of correctly charged Asn-tRNA(Asn) or Gln-tRNA(Gln) through the transamidation of misacylated Asp-tRNA(Asn) or Glu-tRNA(Gln) in organisms which lack either or both of asparaginyl-tRNA or glutaminyl-tRNA synthetases. The reaction takes place in the presence of glutamine and ATP through an activated phospho-Asp-tRNA(Asn) or phospho-Glu-tRNA(Gln). The polypeptide is Aspartyl/glutamyl-tRNA(Asn/Gln) amidotransferase subunit C (Variovorax paradoxus (strain S110)).